We begin with the raw amino-acid sequence, 986 residues long: Mediator of RNA polymerase II transcription subunit 24 (986 aa).

6 consecutive short sequence motifs (LXXLL motif) follow at residues 128-132 (LNWLL), 341-345 (LTPLL), 445-449 (LDLLL), 554-558 (LVALL), 785-789 (LPNLL), and 855-859 (LMRLL).

It belongs to the Mediator complex subunit 24 family. In terms of assembly, component of the Mediator complex.

The protein resides in the nucleus. Functionally, component of the Mediator complex, a coactivator involved in the regulated transcription of nearly all RNA polymerase II-dependent genes. Mediator functions as a bridge to convey information from gene-specific regulatory proteins to the basal RNA polymerase II transcription machinery. Mediator is recruited to promoters by direct interactions with regulatory proteins and serves as a scaffold for the assembly of a functional preinitiation complex with RNA polymerase II and the general transcription factors. This is Mediator of RNA polymerase II transcription subunit 24 (MED24) from Gallus gallus (Chicken).